Here is a 637-residue protein sequence, read N- to C-terminus: Keratin, type II cytoskeletal 1 (637 aa).

Residues 1 to 187 (MSLQCSSRSL…DPQIQKVKSQ (187 aa)) form a head region. R12 bears the Omega-N-methylarginine mark. A phosphoserine mark is found at S21 and S24. R49 carries the omega-N-methylarginine modification. Position 67 is a phosphoserine (S67). The stretch at 180-328 (QIQKVKSQER…DIDFFSALYQ (149 aa)) forms a coiled coil. The tract at residues 188–223 (EREQIKSLNDKFASFIDKVRFLEQQNQVLQTKWELL) is coil 1A. An IF rod domain is found at 188-501 (EREQIKSLND…KLLEGEEIRM (314 aa)). The linker 1 stretch occupies residues 224–243 (QQVDTTTRTQNLDPFFENYI). A coil 1B region spans residues 244–334 (SILRRKVDSL…ALYQMEMSQM (91 aa)). An N6,N6-dimethyllysine modification is found at K284. A linker 12 region spans residues 335–358 (QTQISETNVVLSMDNNRSLDLDGI). Residue S352 is modified to Phosphoserine. The coil 2 stretch occupies residues 359–497 (ISEVKAQYDS…ATYKKLLEGE (139 aa)). Positions 397–483 (DSVRNTKMEI…QELMNTKLAL (87 aa)) form a coiled coil. The interval 498-637 (EIRMSGECTP…VSTSYSRGTK (140 aa)) is tail. 2 disordered regions span residues 505-533 (CTPN…SGGG) and 563-637 (YGGG…RGTK). Residues 509-524 (VSVSVSTSHTSMSGSS) are compositionally biased toward low complexity. 3 positions are modified to omega-N-methylarginine: R526, R585, and R607. Gly residues predominate over residues 563–618 (YGGGSGGGSYGGGSGGGSSGSHRGGSGGGGGSSGGSYGGSSGGGRGGSSSGGGGVK). The span at 624-637 (TVKFVSTSYSRGTK) shows a compositional bias: polar residues.

The protein belongs to the intermediate filament family. As to quaternary structure, heterotetramer of two type I and two type II keratins. Heterodimer with KRT10. Two heterodimers of KRT1 and KRT10 form a heterotetramer. Forms a heterodimer with KRT14; the interaction is more abundant in the absence of KRT5. Interacts with PLEC isoform 1C, when in a heterodimer with KRT10. Interacts with ITGB1 in the presence of RACK1 and SRC, and with RACK1. Interacts with C1QBP; the association represents a cell surface kininogen receptor. Interacts with EPPK1; interaction is dependent of higher-order structure of intermediate filament. Undergoes deimination of some arginine residues (citrullination). Expressed in the infundibular regions of the ear, the interfollicular epidermis of the back, in the interscale regions containing hair follicles in the tail, and in the soles of the footpads (at protein level).

It is found in the cell membrane. The protein localises to the cytoplasm. Functionally, may regulate the activity of kinases such as PKC and SRC via binding to integrin beta-1 (ITB1) and the receptor of activated protein C kinase 1 (RACK1). In complex with C1QBP is a high affinity receptor for kininogen-1/HMWK. The polypeptide is Keratin, type II cytoskeletal 1 (Krt1) (Mus musculus (Mouse)).